Reading from the N-terminus, the 34-residue chain is Photosystem II reaction center protein M (34 aa).

The helical transmembrane segment at 7-27 threads the bilayer; that stretch reads GFVATLLFVLVPAIFLIILYI.

Belongs to the PsbM family. PSII is composed of 1 copy each of membrane proteins PsbA, PsbB, PsbC, PsbD, PsbE, PsbF, PsbH, PsbI, PsbJ, PsbK, PsbL, PsbM, PsbT, PsbX, PsbY, PsbZ, Psb30/Ycf12, peripheral proteins PsbO, CyanoQ (PsbQ), PsbU, PsbV and a large number of cofactors. It forms dimeric complexes.

The protein resides in the cellular thylakoid membrane. One of the components of the core complex of photosystem II (PSII). PSII is a light-driven water:plastoquinone oxidoreductase that uses light energy to abstract electrons from H(2)O, generating O(2) and a proton gradient subsequently used for ATP formation. It consists of a core antenna complex that captures photons, and an electron transfer chain that converts photonic excitation into a charge separation. This subunit is found at the monomer-monomer interface. This Synechococcus sp. (strain RCC307) protein is Photosystem II reaction center protein M.